Consider the following 400-residue polypeptide: Argininosuccinate synthase (400 aa).

Residue 8–16 (AYSGGLDTS) coordinates ATP. 2 residues coordinate L-citrulline: tyrosine 87 and serine 92. An ATP-binding site is contributed by glycine 117. Residues threonine 119, asparagine 123, and aspartate 124 each coordinate L-aspartate. Asparagine 123 contacts L-citrulline. Positions 127, 175, 259, and 271 each coordinate L-citrulline.

The protein belongs to the argininosuccinate synthase family. Type 1 subfamily. As to quaternary structure, homotetramer.

The protein resides in the cytoplasm. It catalyses the reaction L-citrulline + L-aspartate + ATP = 2-(N(omega)-L-arginino)succinate + AMP + diphosphate + H(+). It participates in amino-acid biosynthesis; L-arginine biosynthesis; L-arginine from L-ornithine and carbamoyl phosphate: step 2/3. The polypeptide is Argininosuccinate synthase (Frankia alni (strain DSM 45986 / CECT 9034 / ACN14a)).